The chain runs to 287 residues: MATFFGEVQSVFSRAVDEDDEEEEGEEEEEDREIIAELERKREVHVTWNPEVTAAIESSPNRRLPCSNVILSVGDNATGFVSSYILSSGSWEVCGSITLWNERCRDCNPRKDSLPAPSSCTFYRSITDPTVLLCQCNSYIAEDQLFQWCEKVFGSLEKSSLNVTVLSTCPVSEYKTPESTYSLPVPFLKALRTSEYREEVPCPLLEQPNIADGLPAAVLTYCQVWQIPAVFYRCYTDLSKLDSITIDAFRPLLSCQRMSRLAADSAKIQETLRKTVKSSEIQSNLYI.

A disordered region spans residues 1-32 (MATFFGEVQSVFSRAVDEDDEEEEGEEEEEDR). The segment covering 17–32 (DEDDEEEEGEEEEEDR) has biased composition (acidic residues).

This sequence belongs to the PSMG1 family. Forms a heterodimer with psmg2. Degraded by the proteasome upon completion of 20S proteasome maturation.

The protein localises to the cytoplasm. Its subcellular location is the endoplasmic reticulum. Functionally, chaperone protein which promotes assembly of the 20S proteasome as part of a heterodimer with psmg2. The protein is Proteasome assembly chaperone 1 of Xenopus tropicalis (Western clawed frog).